The primary structure comprises 249 residues: Coproheme decarboxylase (249 aa).

Fe-coproporphyrin III is bound by residues arginine 131, 145-149, histidine 172, and glutamine 185; that span reads YPMDK. The active site involves tyrosine 145.

This sequence belongs to the ChdC family. Type 1 subfamily. Requires Fe-coproporphyrin III as cofactor.

The enzyme catalyses Fe-coproporphyrin III + 2 H2O2 + 2 H(+) = heme b + 2 CO2 + 4 H2O. It carries out the reaction Fe-coproporphyrin III + H2O2 + H(+) = harderoheme III + CO2 + 2 H2O. It catalyses the reaction harderoheme III + H2O2 + H(+) = heme b + CO2 + 2 H2O. It functions in the pathway porphyrin-containing compound metabolism; protoheme biosynthesis. Its function is as follows. Involved in coproporphyrin-dependent heme b biosynthesis. Catalyzes the decarboxylation of Fe-coproporphyrin III (coproheme) to heme b (protoheme IX), the last step of the pathway. The reaction occurs in a stepwise manner with a three-propionate intermediate. This Staphylococcus saprophyticus subsp. saprophyticus (strain ATCC 15305 / DSM 20229 / NCIMB 8711 / NCTC 7292 / S-41) protein is Coproheme decarboxylase.